We begin with the raw amino-acid sequence, 697 residues long: Glycine--tRNA ligase beta subunit (697 aa).

It belongs to the class-II aminoacyl-tRNA synthetase family. In terms of assembly, tetramer of two alpha and two beta subunits.

It localises to the cytoplasm. It catalyses the reaction tRNA(Gly) + glycine + ATP = glycyl-tRNA(Gly) + AMP + diphosphate. This is Glycine--tRNA ligase beta subunit from Ralstonia nicotianae (strain ATCC BAA-1114 / GMI1000) (Ralstonia solanacearum).